A 304-amino-acid polypeptide reads, in one-letter code: Porphobilinogen deaminase (304 aa).

Position 240 is an S-(dipyrrolylmethanemethyl)cysteine (Cys-240).

Belongs to the HMBS family. As to quaternary structure, monomer. Dipyrromethane serves as cofactor.

The enzyme catalyses 4 porphobilinogen + H2O = hydroxymethylbilane + 4 NH4(+). The protein operates within porphyrin-containing compound metabolism; protoporphyrin-IX biosynthesis; coproporphyrinogen-III from 5-aminolevulinate: step 2/4. Functionally, tetrapolymerization of the monopyrrole PBG into the hydroxymethylbilane pre-uroporphyrinogen in several discrete steps. The protein is Porphobilinogen deaminase of Xanthomonas campestris pv. campestris (strain B100).